The following is a 233-amino-acid chain: ATP synthase subunit a (233 aa).

6 helical membrane passes run 27 to 47 (ANFV…FAIL), 85 to 105 (YLAF…IGVV), 114 to 134 (VPSV…IVGV), 143 to 163 (LAHF…IELV), 189 to 209 (VFLK…HVFV), and 210 to 230 (SFLQ…GAVA).

It belongs to the ATPase A chain family. As to quaternary structure, F-type ATPases have 2 components, CF(1) - the catalytic core - and CF(0) - the membrane proton channel. CF(1) has five subunits: alpha(3), beta(3), gamma(1), delta(1), epsilon(1). CF(0) has three main subunits: a(1), b(2) and c(9-12). The alpha and beta chains form an alternating ring which encloses part of the gamma chain. CF(1) is attached to CF(0) by a central stalk formed by the gamma and epsilon chains, while a peripheral stalk is formed by the delta and b chains.

It localises to the cell inner membrane. In terms of biological role, key component of the proton channel; it plays a direct role in the translocation of protons across the membrane. This Solibacter usitatus (strain Ellin6076) protein is ATP synthase subunit a.